The sequence spans 87 residues: Beta-toxin CsE3 (87 aa).

Residues M1–A19 form the signal peptide. The 66-residue stretch at K20–N85 folds into the LCN-type CS-alpha/beta domain. Disulfide bonds link C31–C84, C35–C60, C44–C65, and C48–C67. At N85 the chain carries Asparagine amide.

It belongs to the long (4 C-C) scorpion toxin superfamily. Sodium channel inhibitor family. Beta subfamily. As to expression, expressed by the venom gland.

It localises to the secreted. Functionally, beta toxins bind voltage-independently at site-4 of sodium channels (Nav) and shift the voltage of activation toward more negative potentials thereby affecting sodium channel activation and promoting spontaneous and repetitive firing. This Centruroides sculpturatus (Arizona bark scorpion) protein is Beta-toxin CsE3.